Consider the following 255-residue polypeptide: ATP synthase subunit a (255 aa).

The next 6 membrane-spanning stretches (helical) occupy residues 40–60 (TEPI…ASEV), 109–129 (LIGG…IPGV), 135–155 (NLNI…YYGL), 163–183 (VAHL…IEVI), 196–218 (LMLN…ALFV), and 230–250 (IVVQ…LATE).

This sequence belongs to the ATPase A chain family. In terms of assembly, F-type ATPases have 2 components, CF(1) - the catalytic core - and CF(0) - the membrane proton channel. CF(1) has five subunits: alpha(3), beta(3), gamma(1), delta(1), epsilon(1). CF(0) has three main subunits: a(1), b(2) and c(9-12). The alpha and beta chains form an alternating ring which encloses part of the gamma chain. CF(1) is attached to CF(0) by a central stalk formed by the gamma and epsilon chains, while a peripheral stalk is formed by the delta and b chains.

The protein localises to the cell inner membrane. Its function is as follows. Key component of the proton channel; it plays a direct role in the translocation of protons across the membrane. The sequence is that of ATP synthase subunit a from Sorangium cellulosum (strain So ce56) (Polyangium cellulosum (strain So ce56)).